The sequence spans 292 residues: Inhibitory synaptic factor 1 (292 aa).

The segment at 1–25 (MNIRGAPDLGQPSDDPNSGGERERI) is disordered. Positions 30–63 (KMVIGQLEGILRELKEVAKELREVVSQIDKLTSD) form a coiled coil. The tract at residues 120–292 (TPSDSVDGPE…ATKQKAKGKN (173 aa)) is disordered. Basic and acidic residues predominate over residues 180 to 192 (GTRERVRFSDKVL). Positions 198-216 (CDDEEGDGEEGEEEEEGDL) are enriched in acidic residues. Positions 263-285 (RNSSTQTVSDKSTQTVLPYTATK) are enriched in polar residues.

It belongs to the INSYN1 family. Interacts with GPHN.

The protein localises to the postsynaptic density. Its function is as follows. Component of the protein machinery at the inhibitory synapses, probably acting as a scaffold. Inhibitory synapses dampen neuronal activity through postsynaptic hyperpolarization. This synaptic inhibition is fundamental for the functioning of the central nervous system, shaping and orchestrating the flow of information through neuronal networks to generate a precise neural code. The polypeptide is Inhibitory synaptic factor 1 (Insyn1) (Mus musculus (Mouse)).